The sequence spans 256 residues: 5-keto-4-deoxy-D-glucarate aldolase (256 aa).

His-50 functions as the Proton acceptor in the catalytic mechanism. Residue Gln-151 coordinates substrate. Glu-153 is a binding site for Mg(2+). Ser-178 and Asp-179 together coordinate substrate. Position 179 (Asp-179) interacts with Mg(2+).

This sequence belongs to the HpcH/HpaI aldolase family. KDGluc aldolase subfamily. Homohexamer; trimer of dimers. It depends on Mg(2+) as a cofactor.

It carries out the reaction 5-dehydro-4-deoxy-D-glucarate = 2-hydroxy-3-oxopropanoate + pyruvate. It catalyses the reaction 2-dehydro-3-deoxy-D-glucarate = 2-hydroxy-3-oxopropanoate + pyruvate. It participates in carbohydrate acid metabolism; galactarate degradation; D-glycerate from galactarate: step 2/3. Functionally, catalyzes the reversible retro-aldol cleavage of both 5-keto-4-deoxy-D-glucarate and 2-keto-3-deoxy-D-glucarate to pyruvate and tartronic semialdehyde. The protein is 5-keto-4-deoxy-D-glucarate aldolase of Salmonella paratyphi A (strain ATCC 9150 / SARB42).